A 468-amino-acid chain; its full sequence is MMSSYVMSPVDETYTLFQILKGSALFLLVLWTIFANSLVFIVLYKNPRLQTVPNLLVGNLAFSDLALGLIVLPLSSVYAIAGEWVFPDALCEVFVSADILCSTASIWNLSIVGLDRYWAITSPVAYMSKRNKRTAGIMILSVWISSALISLAPLLGWKQTAQTPNLIYEKNNTVRQCTFLDLPSYTVYSATGSFFIPTLLMFFVYFKIYQAFAKHRARQIYRQKLAVSSHVIRKHIESTILHEISHVLPTSDEFAKEEEEEEDSESSGQVENGLGNGNDAIIEEDECEDEDSDEKRDDHTSMTTVTATVTGPTEAPYMKREAKISKSVPIEKESAIQKREAKPMRSVMAISYEKVKRHKNRKERIYRKSLQRKPKAISAAKERRGVKVLGIILGCFTVCWAPFFTMYVLVQFCKDCSPNAHIEMFITWLGYSNSAMNPIIYTVFNRDYQIALKRLFTSEKKPSSTSRV.

The Extracellular segment spans residues 1–23 (MMSSYVMSPVDETYTLFQILKGS). The helical transmembrane segment at 24–43 (ALFLLVLWTIFANSLVFIVL) threads the bilayer. The Cytoplasmic segment spans residues 44-54 (YKNPRLQTVPN). The helical transmembrane segment at 55-77 (LLVGNLAFSDLALGLIVLPLSSV) threads the bilayer. Residues 78 to 91 (YAIAGEWVFPDALC) are Extracellular-facing. A disulfide bridge connects residues Cys-91 and Cys-177. Residues 92-114 (EVFVSADILCSTASIWNLSIVGL) form a helical membrane-spanning segment. Over 115 to 134 (DRYWAITSPVAYMSKRNKRT) the chain is Cytoplasmic. A helical membrane pass occupies residues 135-157 (AGIMILSVWISSALISLAPLLGW). Over 158 to 186 (KQTAQTPNLIYEKNNTVRQCTFLDLPSYT) the chain is Extracellular. An N-linked (GlcNAc...) asparagine glycan is attached at Asn-171. Residues 187–209 (VYSATGSFFIPTLLMFFVYFKIY) traverse the membrane as a helical segment. At 210 to 387 (QAFAKHRARQ…SAAKERRGVK (178 aa)) the chain is on the cytoplasmic side. The tract at residues 252-306 (DEFAKEEEEEEDSESSGQVENGLGNGNDAIIEEDECEDEDSDEKRDDHTSMTTVT) is disordered. 2 stretches are compositionally biased toward acidic residues: residues 255-265 (AKEEEEEEDSE) and 281-292 (IIEEDECEDEDS). A helical membrane pass occupies residues 388 to 410 (VLGIILGCFTVCWAPFFTMYVLV). The Extracellular segment spans residues 411-424 (QFCKDCSPNAHIEM). Residues 425-444 (FITWLGYSNSAMNPIIYTVF) form a helical membrane-spanning segment. Residues 445–468 (NRDYQIALKRLFTSEKKPSSTSRV) lie on the Cytoplasmic side of the membrane.

It belongs to the G-protein coupled receptor 1 family. Expressed in the pharyngeal neurons, MCL/R and NSML/R and the AS group of amphidial sensory neurons, ASEL/R, AGSL/R, ASHL/R and ASIL/R.

Its subcellular location is the cell membrane. G-protein coupled receptor for tyramine, a known neurotransmitter and neuromodulator and direct precursor of octopamine. Expression in amphidial sensory neurons suggests a role in chemosensation. This is Tyramine receptor tyra-2 (tyra-2) from Caenorhabditis elegans.